The primary structure comprises 795 residues: Phenylalanine--tRNA ligase beta subunit (795 aa).

In terms of domain architecture, tRNA-binding spans 39-148; sequence AGSFNGVVVG…ADAPLGTDIR (110 aa). The 76-residue stretch at 401 to 476 folds into the B5 domain; sequence PKRATITLRR…RVYGYNNIPD (76 aa). Mg(2+)-binding residues include aspartate 454, aspartate 460, glutamate 463, and glutamate 464. The 94-residue stretch at 701–794 folds into the FDX-ACB domain; it reads SRFPANRRDI…LKERFQASLR (94 aa).

The protein belongs to the phenylalanyl-tRNA synthetase beta subunit family. Type 1 subfamily. As to quaternary structure, tetramer of two alpha and two beta subunits. The cofactor is Mg(2+).

It is found in the cytoplasm. It catalyses the reaction tRNA(Phe) + L-phenylalanine + ATP = L-phenylalanyl-tRNA(Phe) + AMP + diphosphate + H(+). The sequence is that of Phenylalanine--tRNA ligase beta subunit from Salmonella choleraesuis (strain SC-B67).